The following is a 340-amino-acid chain: Probable tRNA pseudouridine synthase B (340 aa).

D82 (nucleophile) is an active-site residue. Positions 250–325 (LPKVWIKDSA…IAVDVEKVFM (76 aa)) constitute a PUA domain.

It belongs to the pseudouridine synthase TruB family. Type 2 subfamily.

It carries out the reaction uridine(55) in tRNA = pseudouridine(55) in tRNA. Its function is as follows. Could be responsible for synthesis of pseudouridine from uracil-55 in the psi GC loop of transfer RNAs. In Pyrococcus furiosus (strain ATCC 43587 / DSM 3638 / JCM 8422 / Vc1), this protein is Probable tRNA pseudouridine synthase B.